Consider the following 270-residue polypeptide: 4-hydroxy-tetrahydrodipicolinate reductase (270 aa).

Residues 11-16 (GAGGRM) and glutamate 37 each bind NAD(+). An NADP(+)-binding site is contributed by arginine 38. NAD(+) contacts are provided by residues 101 to 103 (GTT) and 125 to 128 (APNM). The active-site Proton donor/acceptor is the histidine 158. Histidine 159 lines the (S)-2,3,4,5-tetrahydrodipicolinate pocket. The Proton donor role is filled by lysine 162. 168-169 (GT) provides a ligand contact to (S)-2,3,4,5-tetrahydrodipicolinate.

This sequence belongs to the DapB family.

It localises to the cytoplasm. The enzyme catalyses (S)-2,3,4,5-tetrahydrodipicolinate + NAD(+) + H2O = (2S,4S)-4-hydroxy-2,3,4,5-tetrahydrodipicolinate + NADH + H(+). The catalysed reaction is (S)-2,3,4,5-tetrahydrodipicolinate + NADP(+) + H2O = (2S,4S)-4-hydroxy-2,3,4,5-tetrahydrodipicolinate + NADPH + H(+). It functions in the pathway amino-acid biosynthesis; L-lysine biosynthesis via DAP pathway; (S)-tetrahydrodipicolinate from L-aspartate: step 4/4. Functionally, catalyzes the conversion of 4-hydroxy-tetrahydrodipicolinate (HTPA) to tetrahydrodipicolinate. This chain is 4-hydroxy-tetrahydrodipicolinate reductase, found in Shewanella baltica (strain OS223).